The following is a 1125-amino-acid chain: Protein efr-3 (1125 aa).

Disordered regions lie at residues 240-261, 471-493, 788-819, and 845-1093; these read RTSNATAQPSETTGGEPGPNPI, RPSRPTSPPNSSPNGERSDNGAA, TSPPTSPTTSPGRNFTHPMLGSTLSATPKDET, and QAGS…LGEK. Polar residues predominate over residues 242 to 252; the sequence is SNATAQPSETT. A compositionally biased stretch (low complexity) spans 788–798; sequence TSPPTSPTTSP. The span at 845 to 854 shows a compositional bias: polar residues; sequence QAGSSQTASL. Residues 855 to 877 are compositionally biased toward low complexity; the sequence is NGTNGTHRNTVNNNNRLGVNGVT. Composition is skewed to polar residues over residues 878–896, 975–1011, and 1046–1071; these read SPNGSNSNLRPSSSPTGPN, LSFNPAASGSRQGSPGNTSQAASSPPRRTSQDRTQQL, and SRTTSRTQPQATTAHTTLPRPSTSSK.

Belongs to the EFR3 family.

The chain is Protein efr-3 (efr-3) from Neurospora crassa (strain ATCC 24698 / 74-OR23-1A / CBS 708.71 / DSM 1257 / FGSC 987).